We begin with the raw amino-acid sequence, 485 residues long: Alpha-amylase (485 aa).

A signal peptide spans 1 to 18 (MFLTSVLILCSLAALSLG). A Pyrrolidone carboxylic acid modification is found at glutamine 19. Cysteine 46 and cysteine 102 are disulfide-bonded. Ca(2+)-binding residues include asparagine 116, arginine 164, and aspartate 173. Cysteine 152 and cysteine 166 are joined by a disulfide. Residue arginine 201 coordinates chloride. Residue aspartate 203 is the Nucleophile of the active site. Histidine 207 is a binding site for Ca(2+). The Proton donor role is filled by glutamate 240. Chloride is bound by residues asparagine 303 and arginine 339. Cysteine 439 and cysteine 451 are oxidised to a cystine. Asparagine 448 carries N-linked (GlcNAc...) asparagine glycosylation.

Belongs to the glycosyl hydrolase 13 family. Monomer. Ca(2+) serves as cofactor. Chloride is required as a cofactor. As to expression, expressed in larval and adult gut.

The protein localises to the secreted. The enzyme catalyses Endohydrolysis of (1-&gt;4)-alpha-D-glucosidic linkages in polysaccharides containing three or more (1-&gt;4)-alpha-linked D-glucose units.. The sequence is that of Alpha-amylase from Phaedon cochleariae (Mustard beetle).